Reading from the N-terminus, the 675-residue chain is Rho guanine nucleotide exchange factor 37 (675 aa).

The segment at 1–26 (MAKHGADEPSSRSGSPDREGRASEDR) is disordered. One can recognise a DH domain in the interval 30–213 (HQRLAVRELI…QDVNTNINEY (184 aa)). The region spanning 254 to 455 (LKQEAGLIPR…LPHHHVPEPA (202 aa)) is the BAR domain. 2 consecutive SH3 domains span residues 506 to 569 (GPGK…LYHV) and 602 to 665 (PTMN…RARS).

May act as a guanine nucleotide exchange factor (GEF). The protein is Rho guanine nucleotide exchange factor 37 (ARHGEF37) of Homo sapiens (Human).